A 199-amino-acid chain; its full sequence is Chaperone protein TorD (199 aa).

The protein belongs to the TorD/DmsD family. TorD subfamily.

It localises to the cytoplasm. Involved in the biogenesis of TorA. Acts on TorA before the insertion of the molybdenum cofactor and, as a result, probably favors a conformation of the apoenzyme that is competent for acquiring the cofactor. In Escherichia coli O8 (strain IAI1), this protein is Chaperone protein TorD.